Consider the following 199-residue polypeptide: Pathogenesis-related 5 protein Cup a 3 (199 aa).

8 disulfides stabilise this stretch: C9/C198, C50/C60, C65/C71, C113/C187, C118/C171, C126/C136, C140/C149, and C150/C158.

This sequence belongs to the thaumatin family. As to expression, expressed in pollen.

The protein localises to the secreted. It localises to the extracellular space. It is found in the extracellular matrix. Its subcellular location is the pollen coat. The protein resides in the cytoplasm. The protein localises to the nucleus. It localises to the mitochondrion. It is found in the endoplasmic reticulum. Its subcellular location is the golgi apparatus. The protein resides in the golgi stack. The protein localises to the vesicle. It localises to the vacuole. This chain is Pathogenesis-related 5 protein Cup a 3, found in Hesperocyparis arizonica (Arizona cypress).